A 194-amino-acid polypeptide reads, in one-letter code: MRELLEKIAAEGEVVADGVLKVDRFLNHQVDPHLMKRIGEEFAAQFHRERPTKVLTLESSGISPALMAAYELGVPLVVARKRRPLTMTSEVYCAEVYSFTKKETNEIIVSRPLLDSSDRVLIIDDFLANGQAALGMVEVVRQAGADVVGIGIVIEKAFQDGGRLLRSQGFRVVSLARIASLSDGVIRFHEEVMS.

2 residues coordinate xanthine: leucine 20 and asparagine 27. 128-132 (ANGQA) lines the 5-phospho-alpha-D-ribose 1-diphosphate pocket. Lysine 156 contacts xanthine.

The protein belongs to the purine/pyrimidine phosphoribosyltransferase family. Xpt subfamily. Homodimer.

The protein resides in the cytoplasm. The catalysed reaction is XMP + diphosphate = xanthine + 5-phospho-alpha-D-ribose 1-diphosphate. Its pathway is purine metabolism; XMP biosynthesis via salvage pathway; XMP from xanthine: step 1/1. Converts the preformed base xanthine, a product of nucleic acid breakdown, to xanthosine 5'-monophosphate (XMP), so it can be reused for RNA or DNA synthesis. This chain is Xanthine phosphoribosyltransferase, found in Geobacillus thermodenitrificans (strain NG80-2).